The chain runs to 543 residues: CTP synthase (543 aa).

An amidoligase domain region spans residues 1-265; that stretch reads MTRYIFVTGG…DDFVVERFGL (265 aa). A CTP-binding site is contributed by Ser-13. UTP is bound at residue Ser-13. ATP is bound by residues 14 to 19 and Asp-71; that span reads SLGKGI. Mg(2+) contacts are provided by Asp-71 and Glu-139. Residues 146-148, 186-191, and Lys-222 contribute to the CTP site; these read DIE and KTKPTQ. Residues 186 to 191 and Lys-222 contribute to the UTP site; that span reads KTKPTQ. The Glutamine amidotransferase type-1 domain maps to 290–541; it reads TIAMVGKYME…VKAALAQHQK (252 aa). L-glutamine is bound at residue Gly-351. Cys-378 (nucleophile; for glutamine hydrolysis) is an active-site residue. Residues 379-382, Glu-402, and Arg-469 contribute to the L-glutamine site; that span reads LGMQ. Catalysis depends on residues His-514 and Glu-516.

The protein belongs to the CTP synthase family. In terms of assembly, homotetramer.

The catalysed reaction is UTP + L-glutamine + ATP + H2O = CTP + L-glutamate + ADP + phosphate + 2 H(+). It carries out the reaction L-glutamine + H2O = L-glutamate + NH4(+). The enzyme catalyses UTP + NH4(+) + ATP = CTP + ADP + phosphate + 2 H(+). It functions in the pathway pyrimidine metabolism; CTP biosynthesis via de novo pathway; CTP from UDP: step 2/2. Allosterically activated by GTP, when glutamine is the substrate; GTP has no effect on the reaction when ammonia is the substrate. The allosteric effector GTP functions by stabilizing the protein conformation that binds the tetrahedral intermediate(s) formed during glutamine hydrolysis. Inhibited by the product CTP, via allosteric rather than competitive inhibition. Catalyzes the ATP-dependent amination of UTP to CTP with either L-glutamine or ammonia as the source of nitrogen. Regulates intracellular CTP levels through interactions with the four ribonucleotide triphosphates. This Pseudomonas syringae pv. tomato (strain ATCC BAA-871 / DC3000) protein is CTP synthase.